A 248-amino-acid chain; its full sequence is 2,3-bisphosphoglycerate-dependent phosphoglycerate mutase (248 aa).

Residues 8–15, 21–22, Arg-60, 87–90, Lys-98, and 114–115 each bind substrate; these read RHGESTWN, TG, ERHY, and RR. His-9 serves as the catalytic Tele-phosphohistidine intermediate. Glu-87 (proton donor/acceptor) is an active-site residue. Residues 118-137 are disordered; that stretch reads DTPPPALEPTDPRASYDDPR. Residues 127–137 are compositionally biased toward basic and acidic residues; it reads TDPRASYDDPR. Substrate is bound at residue 183-184; sequence GN.

Belongs to the phosphoglycerate mutase family. BPG-dependent PGAM subfamily. As to quaternary structure, homodimer.

The enzyme catalyses (2R)-2-phosphoglycerate = (2R)-3-phosphoglycerate. Its pathway is carbohydrate degradation; glycolysis; pyruvate from D-glyceraldehyde 3-phosphate: step 3/5. Catalyzes the interconversion of 2-phosphoglycerate and 3-phosphoglycerate. The polypeptide is 2,3-bisphosphoglycerate-dependent phosphoglycerate mutase (Cupriavidus necator (strain ATCC 17699 / DSM 428 / KCTC 22496 / NCIMB 10442 / H16 / Stanier 337) (Ralstonia eutropha)).